The sequence spans 1087 residues: Exportin-7-A (1087 aa).

Residues 30 to 96 form the Importin N-terminal domain; the sequence is AEKALVEFTN…RNYVLTYLAT (67 aa).

This sequence belongs to the exportin family. In terms of tissue distribution, expressed in oocytes (at protein level).

It localises to the cytoplasm. It is found in the nucleus. Functionally, mediates the nuclear export of proteins (cargos) with broad substrate specificity. This chain is Exportin-7-A (xpo7-a), found in Xenopus laevis (African clawed frog).